Reading from the N-terminus, the 125-residue chain is Photoactive yellow protein (125 aa).

The PAS domain occupies 23 to 86; sequence LDGLAFGAIQ…GKFKEGVASG (64 aa). Residue Cys69 is modified to S-(4-hydroxycinnamyl)cysteine.

It belongs to the photoactive yellow protein family. In terms of assembly, monomer. Post-translationally, the 4-hydroxycinnamic acid (p-coumaric acid) chromophore is covalently bound via a thioester linkage.

Its function is as follows. Photoactive blue light protein. Probably functions as a photoreceptor for a negative phototaxis response. This chain is Photoactive yellow protein (pyp), found in Halorhodospira halophila (Ectothiorhodospira halophila).